A 71-amino-acid chain; its full sequence is Ceratotoxin-A (71 aa).

A signal peptide spans 1–23; that stretch reads MANLKAVFLICIVAFIALQCVVA. 2 consecutive propeptides follow at residues 24–35 and 65–71; these read EPAAEDSVVVKR and VAAGLVG.

As to quaternary structure, homomer of four to six subunits.

It localises to the secreted. Female-specific peptides with potent activity against Gram-positive and Gram-negative bacteria. They have as well hemolytic activity. This Ceratitis capitata (Mediterranean fruit fly) protein is Ceratotoxin-A (CTXA1).